The sequence spans 234 residues: uncharacterized protein (234 aa).

Residues 103–211 enclose the tRNA-binding domain; it reads LAKKVPFVVC…SHIKIGKSFL (109 aa).

This is an uncharacterized protein from Mycoplasma pneumoniae (strain ATCC 29342 / M129 / Subtype 1) (Mycoplasmoides pneumoniae).